A 482-amino-acid polypeptide reads, in one-letter code: Solute carrier family 49 member A3 (482 aa).

Transmembrane regions (helical) follow at residues 41–61 (WFVL…WISF), 81–101 (YLSL…SWLI), 109–129 (AIVF…GAIV), 150–170 (LCAI…SVWF), 181–201 (IASM…PSVV), 206–226 (YIAH…ILAT), 264–284 (VILM…SSFL), 296–316 (LFAG…AFVC), 330–350 (VKTC…VINF), 355–375 (VLVA…SPVG), 390–410 (SSTG…MILF), and 437–457 (TSML…IIFF).

Belongs to the major facilitator superfamily.

It is found in the membrane. This is Solute carrier family 49 member A3 (slc49a3) from Xenopus tropicalis (Western clawed frog).